A 299-amino-acid chain; its full sequence is Methionine aminopeptidase (299 aa).

A substrate-binding site is contributed by His-64. A divalent metal cation contacts are provided by Asp-84, Asp-95, and His-158. Residue His-166 coordinates substrate. Residues Glu-191 and Glu-284 each contribute to the a divalent metal cation site.

Belongs to the peptidase M24A family. Methionine aminopeptidase archaeal type 2 subfamily. As to quaternary structure, monomer. Co(2+) is required as a cofactor. Zn(2+) serves as cofactor. The cofactor is Mn(2+). It depends on Fe(2+) as a cofactor.

It catalyses the reaction Release of N-terminal amino acids, preferentially methionine, from peptides and arylamides.. Its function is as follows. Removes the N-terminal methionine from nascent proteins. The N-terminal methionine is often cleaved when the second residue in the primary sequence is small and uncharged (Met-Ala-, Cys, Gly, Pro, Ser, Thr, or Val). The sequence is that of Methionine aminopeptidase from Methanothermobacter thermautotrophicus (strain ATCC 29096 / DSM 1053 / JCM 10044 / NBRC 100330 / Delta H) (Methanobacterium thermoautotrophicum).